The primary structure comprises 460 residues: Bifunctional protein GlmU (460 aa).

A pyrophosphorylase region spans residues 1-235 (MALSAAIVLA…PLTVEGVNDR (235 aa)). Residues 9 to 12 (LAAG), K23, Q76, and 81 to 82 (GT) contribute to the UDP-N-acetyl-alpha-D-glucosamine site. A Mg(2+)-binding site is contributed by D109. UDP-N-acetyl-alpha-D-glucosamine contacts are provided by G146, E161, N176, and N233. Residue N233 coordinates Mg(2+). The linker stretch occupies residues 236–256 (VQLAALSKTYNRRVCERWMRD). The tract at residues 257 to 460 (GVTILDPETT…VEGWKPAWER (204 aa)) is N-acetyltransferase. 2 residues coordinate UDP-N-acetyl-alpha-D-glucosamine: R338 and K356. Residue H368 is the Proton acceptor of the active site. UDP-N-acetyl-alpha-D-glucosamine is bound by residues Y371 and N382. Acetyl-CoA-binding positions include 391 to 392 (NY) and A428.

It in the N-terminal section; belongs to the N-acetylglucosamine-1-phosphate uridyltransferase family. The protein in the C-terminal section; belongs to the transferase hexapeptide repeat family. Homotrimer. It depends on Mg(2+) as a cofactor.

The protein resides in the cytoplasm. The catalysed reaction is alpha-D-glucosamine 1-phosphate + acetyl-CoA = N-acetyl-alpha-D-glucosamine 1-phosphate + CoA + H(+). The enzyme catalyses N-acetyl-alpha-D-glucosamine 1-phosphate + UTP + H(+) = UDP-N-acetyl-alpha-D-glucosamine + diphosphate. Its pathway is nucleotide-sugar biosynthesis; UDP-N-acetyl-alpha-D-glucosamine biosynthesis; N-acetyl-alpha-D-glucosamine 1-phosphate from alpha-D-glucosamine 6-phosphate (route II): step 2/2. The protein operates within nucleotide-sugar biosynthesis; UDP-N-acetyl-alpha-D-glucosamine biosynthesis; UDP-N-acetyl-alpha-D-glucosamine from N-acetyl-alpha-D-glucosamine 1-phosphate: step 1/1. It functions in the pathway bacterial outer membrane biogenesis; LPS lipid A biosynthesis. Its function is as follows. Catalyzes the last two sequential reactions in the de novo biosynthetic pathway for UDP-N-acetylglucosamine (UDP-GlcNAc). The C-terminal domain catalyzes the transfer of acetyl group from acetyl coenzyme A to glucosamine-1-phosphate (GlcN-1-P) to produce N-acetylglucosamine-1-phosphate (GlcNAc-1-P), which is converted into UDP-GlcNAc by the transfer of uridine 5-monophosphate (from uridine 5-triphosphate), a reaction catalyzed by the N-terminal domain. The protein is Bifunctional protein GlmU of Bifidobacterium longum (strain DJO10A).